Consider the following 214-residue polypeptide: Vascular endothelial growth factor A (214 aa).

A signal peptide spans 1–26 (MNFLLSWVHWSLALLLYLHHAKWSQA). 3 cysteine pairs are disulfide-bonded: cysteine 51–cysteine 93, cysteine 82–cysteine 127, and cysteine 86–cysteine 129. Asparagine 100 carries an N-linked (GlcNAc...) asparagine glycan. The span at 131–142 (PKKDRARQEKKS) shows a compositional bias: basic and acidic residues. The segment at 131 to 162 (PKKDRARQEKKSIRGKGKGQKRKRKKSRYKPW) is disordered. Residues 143–159 (IRGKGKGQKRKRKKSRY) are compositionally biased toward basic residues.

This sequence belongs to the PDGF/VEGF growth factor family. In terms of assembly, homodimer; disulfide-linked. Also found as heterodimer with PGF. Interacts with NRP1. Interacts with BSG. Interacts with CD82; this interaction inhibits VEGFA-mediated signaling pathway.

It localises to the secreted. Functionally, growth factor active in angiogenesis, vasculogenesis and endothelial cell growth. Induces endothelial cell proliferation, promotes cell migration, inhibits apoptosis and induces permeabilization of blood vessels. Binds to the FLT1/VEGFR1 and KDR/VEGFR2 receptors, heparan sulfate and heparin. Binding to NRP1 receptor initiates a signaling pathway needed for motor neuron axon guidance and cell body migration, including for the caudal migration of facial motor neurons from rhombomere 4 to rhombomere 6 during embryonic development. Also binds the DEAR/FBXW7-AS1 receptor. In Canis lupus familiaris (Dog), this protein is Vascular endothelial growth factor A (VEGFA).